The chain runs to 130 residues: Small ribosomal subunit protein uS9 (130 aa).

This sequence belongs to the universal ribosomal protein uS9 family.

This is Small ribosomal subunit protein uS9 from Xanthomonas campestris pv. campestris (strain 8004).